Reading from the N-terminus, the 326-residue chain is MERKVSRIYLASEPNVPYFLQVSWERAIGSGFVITLTDGHSAWTATVSELEISQEADDMAMEKGKYIDELRKALVPGSGAAGTYKFLFSKESQHFSLEKELKDVSFRLGSFNLDKVSNSAEVIRELICYCLDTITEKQAKNEHLQKENERLLRDWNDVQGRFEKCVSAKEALEADLYQRFILVLNEKKTKIRSLHKLLNEVQQLEESTKPERENPCSDKTPEEHGLYDGSTDEESGAPVQAAETLHKDDSIFSSPDVTDIAPSRKRRHRMQKNLGTEPKMAPQELPLQEKERLASSLPQTLKEESTSAENMSLETLRNSSPEDLFD.

Residues 1–212 (MERKVSRIYL…QLEESTKPER (212 aa)) are interaction with IFFO1. Position 53 is a phosphoserine; by PRKDC (Ser53). Coiled coils occupy residues 131–165 (LDTI…FEKC) and 185–209 (NEKK…ESTK). An interaction with LIG4 region spans residues 180–211 (FILVLNEKKTKIRSLHKLLNEVQQLEESTKPE). Ser193 carries the phosphoserine; by PRKDC modification. The segment at 203–326 (QLEESTKPER…RNSSPEDLFD (124 aa)) is disordered. Residues 206 to 226 (ESTKPERENPCSDKTPEEHGL) are compositionally biased toward basic and acidic residues. Position 227 is a phosphotyrosine (Tyr227). Ser230 bears the Phosphoserine mark. Thr231 bears the Phosphothreonine mark. Residue Ser235 is modified to Phosphoserine. The residue at position 244 (Thr244) is a Phosphothreonine. At Ser250 the chain carries Phosphoserine. Ser254 is modified (phosphoserine; by PRKDC). The Nuclear localization signal signature appears at 264–269 (RKRRHR). Lys290 is covalently cross-linked (Glycyl lysine isopeptide (Lys-Gly) (interchain with G-Cter in ubiquitin)). The residue at position 295 (Ser295) is a Phosphoserine; by PRKDC. Ser296 carries the phosphoserine modification. 2 positions are modified to phosphoserine; by PRKDC: Ser307 and Ser312. Polar residues predominate over residues 307-326 (SAENMSLETLRNSSPEDLFD). Residue Thr315 is modified to Phosphothreonine; by PRKDC. 2 positions are modified to phosphoserine; by PRKDC: Ser319 and Ser320.

Belongs to the XRCC4-XLF family. XRCC4 subfamily. In terms of assembly, homodimer and homotetramer in solution. Interacts with NHEJ1/XLF; the interaction is direct and is mediated via a head-to-head interaction between N-terminal head regions. Interacts with LIG4; the LIG4-XRCC4 subcomplex has a 1:2 stoichiometry and XRCC4 is required for LIG4 stability. Component of the core long-range non-homologous end joining (NHEJ) complex (also named DNA-PK complex) composed of PRKDC, LIG4, XRCC4, XRCC6/Ku70, XRCC5/Ku86 and NHEJ1/XLF. Additional component of the NHEJ complex includes PAXX. Following autophosphorylation, PRKDC dissociates from DNA, leading to formation of the short-range NHEJ complex, composed of LIG4, XRCC4, XRCC6/Ku70, XRCC5/Ku86 and NHEJ1/XLF. Interacts with PRKDC; the interaction is direct. Interacts with XRCC6/Ku70; the interaction is direct. Interacts with APTX and APLF. Forms a heterotetramer with IFFO1; the interaction involves LIG4-free XRCC4 and leads to the relocalization of IFFO1 to the sites of DNA damage. Interacts with PNKP; mainly interacts with PNKP when phosphorylated at Thr-231, but is also able to interact at much lower level with PNKP when not unphosphorylated. Interacts with POLL (DNA polymerase lambda). As to quaternary structure, interacts with XKR4; interacts with the processed form of XKR4, which is cleaved by caspase. Phosphorylated by PRKDC at the C-terminus in response to DNA damage; Ser-254 and Ser-312 constitute the main phosphorylation sites. Phosphorylation by PRKDC at the C-terminus of XRCC4 and NHEJ1/XLF are highly redundant and regulate ability of the XRCC4-NHEJ1/XLF subcomplex to bridge DNA. Phosphorylation by PRKDC does not prevent interaction with NHEJ1/XLF but disrupts ability to bridge DNA and promotes detachment from DNA. Phosphorylation at Ser-319 and Ser-320 by PRKDC promotes recognition by the SCF(FBXW7) complex and subsequent ubiquitination via 'Lys-63'-linked ubiquitin. Phosphorylation at Thr-231 by CK2 promotes interaction with PNKP; regulating PNKP activity and localization to DNA damage sites. Phosphorylation by CK2 promotes interaction with APTX. In terms of processing, ubiquitinated at Lys-290 by the SCF(FBXW7) complex via 'Lys-63'-linked ubiquitination, thereby promoting double-strand break repair: the SCF(FBXW7) complex specifically recognizes XRCC4 when phosphorylated at Ser-319 and Ser-320 by PRKDC, and 'Lys-63'-linked ubiquitination facilitates DNA non-homologous end joining (NHEJ) by enhancing association with XRCC5/Ku80 and XRCC6/Ku70. Monoubiquitinated. Post-translationally, undergoes proteolytic processing by caspase-3 (CASP3). This generates the protein XRCC4, C-terminus (XRCC4/C), which translocates to the cytoplasm and activates phospholipid scramblase activity of XKR4, thereby promoting phosphatidylserine exposure on apoptotic cell surface.

Its subcellular location is the nucleus. The protein resides in the chromosome. It is found in the cytoplasm. DNA non-homologous end joining (NHEJ) core factor, required for double-strand break repair and V(D)J recombination. Acts as a scaffold protein that regulates recruitment of other proteins to DNA double-strand breaks (DSBs). Associates with NHEJ1/XLF to form alternating helical filaments that bridge DNA and act like a bandage, holding together the broken DNA until it is repaired. The XRCC4-NHEJ1/XLF subcomplex binds to the DNA fragments of a DSB in a highly diffusive manner and robustly bridges two independent DNA molecules, holding the broken DNA fragments in close proximity to one other. The mobility of the bridges ensures that the ends remain accessible for further processing by other repair factors. Plays a key role in the NHEJ ligation step of the broken DNA during DSB repair via direct interaction with DNA ligase IV (LIG4): the LIG4-XRCC4 subcomplex reseals the DNA breaks after the gap filling is completed. XRCC4 stabilizes LIG4, regulates its subcellular localization and enhances LIG4's joining activity. Binding of the LIG4-XRCC4 subcomplex to DNA ends is dependent on the assembly of the DNA-dependent protein kinase complex DNA-PK to these DNA ends. Promotes displacement of PNKP from processed strand break termini. Its function is as follows. Acts as an activator of the phospholipid scramblase activity of XKR4. This form, which is generated upon caspase-3 (CASP3) cleavage, translocates into the cytoplasm and interacts with XKR4, thereby promoting phosphatidylserine scramblase activity of XKR4 and leading to phosphatidylserine exposure on apoptotic cell surface. The protein is DNA repair protein XRCC4 of Mus musculus (Mouse).